The following is a 306-amino-acid chain: Methionyl-tRNA formyltransferase (306 aa).

105–108 (SLLP) is a (6S)-5,6,7,8-tetrahydrofolate binding site.

This sequence belongs to the Fmt family.

The catalysed reaction is L-methionyl-tRNA(fMet) + (6R)-10-formyltetrahydrofolate = N-formyl-L-methionyl-tRNA(fMet) + (6S)-5,6,7,8-tetrahydrofolate + H(+). Functionally, attaches a formyl group to the free amino group of methionyl-tRNA(fMet). The formyl group appears to play a dual role in the initiator identity of N-formylmethionyl-tRNA by promoting its recognition by IF2 and preventing the misappropriation of this tRNA by the elongation apparatus. The sequence is that of Methionyl-tRNA formyltransferase from Rubrobacter xylanophilus (strain DSM 9941 / JCM 11954 / NBRC 16129 / PRD-1).